The sequence spans 90 residues: Bombyxin B-6 (90 aa).

Residues 1–20 (MMKTSVMFMLVVVISLMCSS) form the signal peptide. Intrachain disulfides connect Cys-30-Cys-76, Cys-42-Cys-89, and Cys-75-Cys-80. Positions 49–67 (GVAQYAPYFWTRQYLGSRG) are cleaved as a propeptide — c peptide like.

It belongs to the insulin family. In terms of assembly, heterodimer of a B chain and an A chain linked by two disulfide bonds.

The protein resides in the secreted. Brain peptide responsible for activation of prothoracic glands to produce ecdysone in insects. This Bombyx mori (Silk moth) protein is Bombyxin B-6 (BBXB6).